The following is a 349-amino-acid chain: Nicotinate-nucleotide--dimethylbenzimidazole phosphoribosyltransferase (349 aa).

Glu315 functions as the Proton acceptor in the catalytic mechanism.

It belongs to the CobT family.

It carries out the reaction 5,6-dimethylbenzimidazole + nicotinate beta-D-ribonucleotide = alpha-ribazole 5'-phosphate + nicotinate + H(+). The protein operates within nucleoside biosynthesis; alpha-ribazole biosynthesis; alpha-ribazole from 5,6-dimethylbenzimidazole: step 1/2. Functionally, catalyzes the synthesis of alpha-ribazole-5'-phosphate from nicotinate mononucleotide (NAMN) and 5,6-dimethylbenzimidazole (DMB). The sequence is that of Nicotinate-nucleotide--dimethylbenzimidazole phosphoribosyltransferase from Variovorax paradoxus (strain S110).